A 209-amino-acid polypeptide reads, in one-letter code: Large ribosomal subunit protein uL3 (209 aa).

Residues 141-163 are disordered; sequence RAVGSMGASSDPSRTFKNKRMPG.

It belongs to the universal ribosomal protein uL3 family. In terms of assembly, part of the 50S ribosomal subunit. Forms a cluster with proteins L14 and L19.

One of the primary rRNA binding proteins, it binds directly near the 3'-end of the 23S rRNA, where it nucleates assembly of the 50S subunit. This Clostridium botulinum (strain Kyoto / Type A2) protein is Large ribosomal subunit protein uL3.